Consider the following 91-residue polypeptide: Ice-structuring protein (91 aa).

An N-terminal signal peptide occupies residues 1-21 (MALSLFTVGQLIFLFWTMRIT). A propeptide spans 22–39 (EANPDPAAKAVPAAAAPD) (removed by a dipeptidylpeptidase).

The protein belongs to the type-I AFP family.

The protein resides in the secreted. In terms of biological role, contributes to protect fish blood from freezing at subzero sea water temperatures. Lowers the blood freezing point. Binds to nascent ice crystals and prevents further growth. The sequence is that of Ice-structuring protein from Pseudopleuronectes americanus (Winter flounder).